Consider the following 206-residue polypeptide: Small ribosomal subunit protein uS4 (206 aa).

The S4 RNA-binding domain occupies 96–156 (RRLDNVVYRM…DKSKNQSRIK (61 aa)).

The protein belongs to the universal ribosomal protein uS4 family. As to quaternary structure, part of the 30S ribosomal subunit. Contacts protein S5. The interaction surface between S4 and S5 is involved in control of translational fidelity.

Functionally, one of the primary rRNA binding proteins, it binds directly to 16S rRNA where it nucleates assembly of the body of the 30S subunit. With S5 and S12 plays an important role in translational accuracy. The polypeptide is Small ribosomal subunit protein uS4 (Buchnera aphidicola subsp. Schizaphis graminum (strain Sg)).